A 315-amino-acid polypeptide reads, in one-letter code: Eukaryotic translation initiation factor 2 subunit 1 (315 aa).

In terms of domain architecture, S1 motif spans 17–88 (EDVVMVNVRS…EKGYIDLSKR (72 aa)). 2 positions are modified to phosphoserine: S49 and S52. The segment at 292–315 (RLERENAEVDGDDDAEEMEAKTED) is disordered. A compositionally biased stretch (acidic residues) spans 299–308 (EVDGDDDAEE).

Belongs to the eIF-2-alpha family. Eukaryotic translation initiation factor 2 eIF2 is a heterotrimeric complex composed of an alpha (EIF2S1), a beta (EIF2S2) and a gamma (EIF2S3) chain. Phosphorylation at Ser-49 and Ser-52 stabilizes the eIF-2/GDP/eIF2B complex and prevents GDP/GTP exchange reaction, thus impairing the recycling of eIF-2 between successive rounds of initiation and leading to global inhibition of translation, while concomitantly initiating the preferential translation of integrated stress response (ISR)-specific mRNAs.

It is found in the cytoplasm. The protein localises to the stress granule. It localises to the cytosol. With respect to regulation, activity is regulated by phosphorylation at Ser-49 and Ser-52, which stabilizes the eIF2/GDP/eIF2B complex and prevents the eIF2B-mediated exchange of GDP for GTP, thereby preventing the formation of the 43S pre-initiation complex (43S PIC). This results in the global attenuation of 5' cap-dependent protein synthesis and concomitant translation of ISR-specific mRNAs that contain a short upstream open reading frame (uORF) in their 5' UTR. Member of the eIF2 complex that functions in the early steps of protein synthesis by forming a ternary complex with GTP and initiator tRNA. This complex binds to a 40S ribosomal subunit, followed by mRNA binding to form a 43S pre-initiation complex. Junction of the 60S ribosomal subunit to form the 80S initiation complex is preceded by hydrolysis of the GTP bound to eIF2 and release of an eIF2-GDP binary complex. In order for eIF2 to recycle and catalyze another round of initiation, the GDP bound to eIF2 must exchange with GTP by way of a reaction catalyzed by eIF2B. EIF2S1/eIF2-alpha is a key component of the integrated stress response (ISR), required for adaptation to various stress: phosphorylation by metabolic-stress sensing protein kinases (EIF2AK1/HRI, EIF2AK2/PKR, EIF2AK3/PERK and EIF2AK4/GCN2) in response to stress converts EIF2S1/eIF2-alpha in a global protein synthesis inhibitor, leading to a attenuation of cap-dependent translation, while concomitantly initiating the preferential translation of ISR-specific mRNAs, such as the transcriptional activators ATF4 and QRICH1. The protein is Eukaryotic translation initiation factor 2 subunit 1 (EIF2S1) of Gallus gallus (Chicken).